The primary structure comprises 58 residues: Potassium channel toxin alpha-KTx 26.2 (58 aa).

A signal peptide spans 1–19; sequence MKTIFVVILVLFVLSAMLA. Disulfide bonds link Cys31–Cys49, Cys35–Cys54, and Cys39–Cys56.

This sequence belongs to the short scorpion toxin superfamily. Potassium channel inhibitor family. Alpha-KTx 26 subfamily. Expressed by the venom gland.

The protein resides in the secreted. In terms of biological role, inhibits voltage-gated potassium channels. The chain is Potassium channel toxin alpha-KTx 26.2 from Lychas mucronatus (Chinese swimming scorpion).